A 173-amino-acid polypeptide reads, in one-letter code: GTP-dependent dephospho-CoA kinase (173 aa).

Residues Asp52, Val53, Val54, Asp71, Lys73, and Asp122 each coordinate GTP.

The protein belongs to the GTP-dependent DPCK family.

It catalyses the reaction 3'-dephospho-CoA + GTP = GDP + CoA + H(+). Its pathway is cofactor biosynthesis; coenzyme A biosynthesis. Its function is as follows. Catalyzes the GTP-dependent phosphorylation of the 3'-hydroxyl group of dephosphocoenzyme A to form coenzyme A (CoA). This is GTP-dependent dephospho-CoA kinase from Metallosphaera sedula (strain ATCC 51363 / DSM 5348 / JCM 9185 / NBRC 15509 / TH2).